The following is a 640-amino-acid chain: Threonine--tRNA ligase (640 aa).

The region spanning 1 to 61 (MPIITLPDGS…DHDATLQIIT (61 aa)) is the TGS domain. The interval 242 to 533 (DHRKLGKRLD…LIEHYEGAFP (292 aa)) is catalytic. Residues Cys333, His384, and His510 each coordinate Zn(2+).

It belongs to the class-II aminoacyl-tRNA synthetase family. In terms of assembly, homodimer. Zn(2+) is required as a cofactor.

The protein resides in the cytoplasm. The enzyme catalyses tRNA(Thr) + L-threonine + ATP = L-threonyl-tRNA(Thr) + AMP + diphosphate + H(+). Functionally, catalyzes the attachment of threonine to tRNA(Thr) in a two-step reaction: L-threonine is first activated by ATP to form Thr-AMP and then transferred to the acceptor end of tRNA(Thr). Also edits incorrectly charged L-seryl-tRNA(Thr). This is Threonine--tRNA ligase from Azotobacter vinelandii (strain DJ / ATCC BAA-1303).